The chain runs to 126 residues: Muscarinic acetylcholine receptor M4 (126 aa).

Residues methionine 1–serine 90 are disordered. Residues methionine 1–valine 126 lie on the Cytoplasmic side of the membrane. Over residues alanine 28–proline 39 the composition is skewed to pro residues. Residues asparagine 47–asparagine 57 are compositionally biased toward polar residues. Residues threonine 64–alanine 75 show a composition bias toward low complexity.

The protein belongs to the G-protein coupled receptor 1 family. Muscarinic acetylcholine receptor subfamily. CHRM4 sub-subfamily.

The protein resides in the cell membrane. It localises to the postsynaptic cell membrane. In terms of biological role, the muscarinic acetylcholine receptor mediates various cellular responses, including inhibition of adenylate cyclase, breakdown of phosphoinositides and modulation of potassium channels through the action of G proteins. Primary transducing effect is inhibition of adenylate cyclase. May couple to multiple functional responses in cell lines. The chain is Muscarinic acetylcholine receptor M4 (CHRM4) from Bos taurus (Bovine).